The primary structure comprises 251 residues: Orcokinin peptides type A (251 aa).

Positions 1-20 (MTAQMFTIALLLSLSAIAAA) are cleaved as a signal peptide. 3 consecutive propeptides follow at residues 21-46 (GTIK…GAPV), 225-231 (DYDVFPD), and 249-251 (NVE).

It belongs to the orcokinin family.

It is found in the secreted. Its function is as follows. Myotropic peptides that enhance both the frequency and amplitude of spontaneous hindgut contractions. This chain is Orcokinin peptides type A, found in Procambarus clarkii (Red swamp crayfish).